A 734-amino-acid polypeptide reads, in one-letter code: 1,4-alpha-glucan branching enzyme GlgB (734 aa).

Aspartate 417 acts as the Nucleophile in catalysis. Glutamate 470 (proton donor) is an active-site residue.

Belongs to the glycosyl hydrolase 13 family. GlgB subfamily. As to quaternary structure, monomer.

The catalysed reaction is Transfers a segment of a (1-&gt;4)-alpha-D-glucan chain to a primary hydroxy group in a similar glucan chain.. It participates in glycan biosynthesis; glycogen biosynthesis. In terms of biological role, catalyzes the formation of the alpha-1,6-glucosidic linkages in glycogen by scission of a 1,4-alpha-linked oligosaccharide from growing alpha-1,4-glucan chains and the subsequent attachment of the oligosaccharide to the alpha-1,6 position. In Rhizobium radiobacter (Agrobacterium tumefaciens), this protein is 1,4-alpha-glucan branching enzyme GlgB (glgB).